Reading from the N-terminus, the 428-residue chain is Kynureninase (428 aa).

Pyridoxal 5'-phosphate-binding positions include T104, T105, 132–135 (FPSD), D213, H216, and Y238. Residue K239 is modified to N6-(pyridoxal phosphate)lysine. 2 residues coordinate pyridoxal 5'-phosphate: W267 and T295.

The protein belongs to the kynureninase family. As to quaternary structure, homodimer. It depends on pyridoxal 5'-phosphate as a cofactor.

It carries out the reaction L-kynurenine + H2O = anthranilate + L-alanine + H(+). It catalyses the reaction 3-hydroxy-L-kynurenine + H2O = 3-hydroxyanthranilate + L-alanine + H(+). Its pathway is amino-acid degradation; L-kynurenine degradation; L-alanine and anthranilate from L-kynurenine: step 1/1. The protein operates within cofactor biosynthesis; NAD(+) biosynthesis; quinolinate from L-kynurenine: step 2/3. Catalyzes the cleavage of L-kynurenine (L-Kyn) and L-3-hydroxykynurenine (L-3OHKyn) into anthranilic acid (AA) and 3-hydroxyanthranilic acid (3-OHAA), respectively. The chain is Kynureninase from Bacillus mycoides (strain KBAB4) (Bacillus weihenstephanensis).